We begin with the raw amino-acid sequence, 229 residues long: MHCRIPDTQDTHRLGGIGMTSQRTRNRLIRRLQANGIRDTRVLETMAREPRHLFVDEALAHRAYEDTALPLGHGQTLSQPWIVARMTELVLTARPRRVLEVGTGSGYQTLILARLVEAVWSIERIGALHQRAAARLAMLGADNVRLRHEDGGHGWPQAAPYDVILLTACASVLPPELLAQLADGGELIAPLEDDAGRQWLTRVRRCGITFERTRLERVRFVPLLEGVIQ.

Residue serine 78 is part of the active site.

This sequence belongs to the methyltransferase superfamily. L-isoaspartyl/D-aspartyl protein methyltransferase family.

The protein resides in the cytoplasm. It carries out the reaction [protein]-L-isoaspartate + S-adenosyl-L-methionine = [protein]-L-isoaspartate alpha-methyl ester + S-adenosyl-L-homocysteine. Its function is as follows. Catalyzes the methyl esterification of L-isoaspartyl residues in peptides and proteins that result from spontaneous decomposition of normal L-aspartyl and L-asparaginyl residues. It plays a role in the repair and/or degradation of damaged proteins. The protein is Protein-L-isoaspartate O-methyltransferase of Chromohalobacter salexigens (strain ATCC BAA-138 / DSM 3043 / CIP 106854 / NCIMB 13768 / 1H11).